The sequence spans 95 residues: Hge-scorpine (95 aa).

The signal sequence occupies residues 1–19 (MNTKLTVLCFLGIVTIVSC). The 40-residue stretch at 55-94 (QFGCFANVDVKGDCKRHCKAEDKEGICHGTKCKCGVPISY) folds into the BetaSPN-type CS-alpha/beta domain. Cystine bridges form between Cys-58-Cys-81, Cys-68-Cys-86, and Cys-72-Cys-88.

The protein belongs to the long chain scorpion toxin family. Class 3 subfamily. Expressed by the venom gland.

Its subcellular location is the secreted. Has antibacterial activity against B.subtilis, but not against S.aureus. Also has hemolytic and cytolytic activities. Since cell lysis occurs at the tested concentrations, observation of activity on potassium channels is impossible. Functionally, blocks Kv1.1/KCNA1 (IC(50)=185 nM) potassium channels. Shows a weak hemolytic activity. The protein is Hge-scorpine of Hoffmannihadrurus gertschi (Scorpion).